The primary structure comprises 106 residues: Urease subunit beta (106 aa).

It belongs to the urease beta subunit family. As to quaternary structure, heterotrimer of UreA (gamma), UreB (beta) and UreC (alpha) subunits. Three heterotrimers associate to form the active enzyme.

The protein resides in the cytoplasm. It carries out the reaction urea + 2 H2O + H(+) = hydrogencarbonate + 2 NH4(+). The protein operates within nitrogen metabolism; urea degradation; CO(2) and NH(3) from urea (urease route): step 1/1. The sequence is that of Urease subunit beta from Klebsiella pneumoniae (strain 342).